The chain runs to 170 residues: Cyclic pyranopterin monophosphate synthase (170 aa).

Substrate contacts are provided by residues 75–77 (LCH) and 113–114 (ME). Asp128 is a catalytic residue.

The protein belongs to the MoaC family. As to quaternary structure, homohexamer; trimer of dimers.

It catalyses the reaction (8S)-3',8-cyclo-7,8-dihydroguanosine 5'-triphosphate = cyclic pyranopterin phosphate + diphosphate. The protein operates within cofactor biosynthesis; molybdopterin biosynthesis. In terms of biological role, catalyzes the conversion of (8S)-3',8-cyclo-7,8-dihydroguanosine 5'-triphosphate to cyclic pyranopterin monophosphate (cPMP). The chain is Cyclic pyranopterin monophosphate synthase from Pelotomaculum thermopropionicum (strain DSM 13744 / JCM 10971 / SI).